Here is a 197-residue protein sequence, read N- to C-terminus: uncharacterized protein (197 aa).

Residues 7 to 27 traverse the membrane as a helical segment; that stretch reads PISVGQMVLICIFILIILFVI.

It belongs to the IIV-6 307L family.

The protein resides in the membrane. This is an uncharacterized protein from Acheta domesticus (House cricket).